A 501-amino-acid polypeptide reads, in one-letter code: Glutamate--tRNA ligase (501 aa).

A 'HIGH' region motif is present at residues 11–21; sequence PSPTGALHIGG. The short motif at 260–264 is the 'KMSKS' region element; it reads KLSKR. Lysine 263 provides a ligand contact to ATP.

This sequence belongs to the class-I aminoacyl-tRNA synthetase family. Glutamate--tRNA ligase type 1 subfamily. Monomer.

Its subcellular location is the cytoplasm. It catalyses the reaction tRNA(Glu) + L-glutamate + ATP = L-glutamyl-tRNA(Glu) + AMP + diphosphate. In terms of biological role, catalyzes the attachment of glutamate to tRNA(Glu) in a two-step reaction: glutamate is first activated by ATP to form Glu-AMP and then transferred to the acceptor end of tRNA(Glu). This is Glutamate--tRNA ligase from Flavobacterium psychrophilum (strain ATCC 49511 / DSM 21280 / CIP 103535 / JIP02/86).